A 487-amino-acid polypeptide reads, in one-letter code: Glutamate--tRNA ligase (487 aa).

The 'HIGH' region motif lies at 10–20 (PSPTGYMHVGN). Positions 251–255 (KLSKR) match the 'KMSKS' region motif. An ATP-binding site is contributed by Lys-254.

The protein belongs to the class-I aminoacyl-tRNA synthetase family. Glutamate--tRNA ligase type 1 subfamily. In terms of assembly, monomer.

It is found in the cytoplasm. It catalyses the reaction tRNA(Glu) + L-glutamate + ATP = L-glutamyl-tRNA(Glu) + AMP + diphosphate. Functionally, catalyzes the attachment of glutamate to tRNA(Glu) in a two-step reaction: glutamate is first activated by ATP to form Glu-AMP and then transferred to the acceptor end of tRNA(Glu). The polypeptide is Glutamate--tRNA ligase (Clostridium kluyveri (strain ATCC 8527 / DSM 555 / NBRC 12016 / NCIMB 10680 / K1)).